Consider the following 404-residue polypeptide: Sialidase (404 aa).

Positions 1-27 (MKKFIKILKVLSMAIVLSACNINGIFA) are cleaved as a signal peptide. Arg55 is a substrate binding site. The active-site Proton acceptor is Asp80. BNR repeat units lie at residues 89 to 100 (AKSTDNGQTWDY), 158 to 169 (VYSDDNGETWSD), and 226 to 237 (IYSKDNGETWTM). Arg263 contacts substrate. Residues 273-284 (YISYDMGSTWEV) form a BNR 4 repeat. Tyr365 serves as the catalytic Nucleophile.

Belongs to the glycosyl hydrolase 33 family. Post-translationally, it is possible that the sialidase is cleaved in front of a cysteine within the leader peptide, forming a glyceride thioether bond which links the protein to the membrane. A second proteolytic cleavage releases the mature extracellular protein.

It localises to the secreted. It carries out the reaction Hydrolysis of alpha-(2-&gt;3)-, alpha-(2-&gt;6)-, alpha-(2-&gt;8)- glycosidic linkages of terminal sialic acid residues in oligosaccharides, glycoproteins, glycolipids, colominic acid and synthetic substrates.. Sialidases have been suggested to be pathogenic factors in microbial infections. The protein is Sialidase of Paraclostridium sordellii (Clostridium sordellii).